A 434-amino-acid polypeptide reads, in one-letter code: Putative nuclease OPG089 (434 aa).

Residues Asp33, Asp74, Glu168, Asp170, Asp196, and Asp198 each coordinate Mg(2+).

Belongs to the XPG/RAD2 endonuclease family. FEN1 subfamily. Requires Mg(2+) as cofactor.

The protein localises to the virion. In terms of biological role, putative nuclease that seems to be required for double-strand break repair, homologous recombination, and production of full-length viral genomic DNA. In Vaccinia virus (strain Copenhagen) (VACV), this protein is Putative nuclease OPG089 (OPG089).